Here is a 695-residue protein sequence, read N- to C-terminus: Polyribonucleotide nucleotidyltransferase (695 aa).

Aspartate 486 and aspartate 492 together coordinate Mg(2+). In terms of domain architecture, KH spans 553 to 612 (PRIETMQINTSKIATVIGPGGKQIRQIIERSGAQVDINDDGVINIAASTQESINKAKELI). Positions 622-690 (GKVYNGRVTS…EKGQLKLSHK (69 aa)) constitute an S1 motif domain.

Belongs to the polyribonucleotide nucleotidyltransferase family. Requires Mg(2+) as cofactor.

The protein localises to the cytoplasm. It catalyses the reaction RNA(n+1) + phosphate = RNA(n) + a ribonucleoside 5'-diphosphate. Functionally, involved in mRNA degradation. Catalyzes the phosphorolysis of single-stranded polyribonucleotides processively in the 3'- to 5'-direction. The protein is Polyribonucleotide nucleotidyltransferase of Chlamydia trachomatis serovar D (strain ATCC VR-885 / DSM 19411 / UW-3/Cx).